Reading from the N-terminus, the 513-residue chain is Ribonuclease Y (513 aa).

A helical transmembrane segment spans residues 6–26; sequence YIIIAVVIIIICVILGLYVVD. Residues 203 to 288 form the KH domain; that stretch reads TVHVVNLPND…EMVEKAKKEV (86 aa). The HD domain occupies 329–422; it reads VLKHSIEVSH…VQAADAISAA (94 aa).

It belongs to the RNase Y family.

It is found in the cell membrane. Endoribonuclease that initiates mRNA decay. In Clostridium botulinum (strain Loch Maree / Type A3), this protein is Ribonuclease Y.